Reading from the N-terminus, the 92-residue chain is YcgL domain-containing protein VC0395_A1544/VC395_2072 (92 aa).

A YcgL domain is found at 1-84 (MLCSIYKSPK…PPENLLEQHK (84 aa)). The interval 71-92 (QLPPPPENLLEQHKERKARQTP) is disordered.

The chain is YcgL domain-containing protein VC0395_A1544/VC395_2072 from Vibrio cholerae serotype O1 (strain ATCC 39541 / Classical Ogawa 395 / O395).